A 274-amino-acid chain; its full sequence is NH(3)-dependent NAD(+) synthetase (274 aa).

ATP is bound at residue 46-53 (GISGGQDS). Aspartate 52 lines the Mg(2+) pocket. Deamido-NAD(+) is bound at residue arginine 140. Threonine 160 is an ATP binding site. Glutamate 165 provides a ligand contact to Mg(2+). Deamido-NAD(+) is bound by residues lysine 173 and aspartate 180. Residues lysine 189 and threonine 211 each contribute to the ATP site. 260–261 (HK) contacts deamido-NAD(+).

It belongs to the NAD synthetase family. Homodimer.

It carries out the reaction deamido-NAD(+) + NH4(+) + ATP = AMP + diphosphate + NAD(+) + H(+). The protein operates within cofactor biosynthesis; NAD(+) biosynthesis; NAD(+) from deamido-NAD(+) (ammonia route): step 1/1. In terms of biological role, catalyzes the ATP-dependent amidation of deamido-NAD to form NAD. Uses ammonia as a nitrogen source. In Sodalis glossinidius (strain morsitans), this protein is NH(3)-dependent NAD(+) synthetase.